We begin with the raw amino-acid sequence, 453 residues long: Plasmepsin II (453 aa).

Over 1 to 37 (MDITVREHDFKHGFIKSNSTFDGLNIDNSKNKKKIQK) the chain is Cytoplasmic. Positions 1–124 (MDITVREHDF…SGLTKTNYLG (124 aa)) are excised as a propeptide. A helical; Signal-anchor for type II membrane protein membrane pass occupies residues 38–58 (GFQILYVLLFCSVMCGLFYYV). Residues 59-453 (YENVWLQRDN…VGIALAKKNL (395 aa)) lie on the Lumenal side of the membrane. In terms of domain architecture, Peptidase A1 spans 140–447 (FYGDAEVGDN…DYDNHSVGIA (308 aa)). Asp158 is an active-site residue. Residues Cys171 and Cys176 are joined by a disulfide bond. Residue Asp338 is part of the active site. An intrachain disulfide couples Cys373 to Cys409.

This sequence belongs to the peptidase A1 family. Component of the hemozoin formation complex (HFC) composed of falcipains FP2A and/or FP2B, plasmepsins PMII, PMIII/HAP and PMIV, heme detoxifying protein HDP and falcilysin FLN. The HFC complex is involved in hemoglobin degradation and detoxification of heme in the food vacuole during the asexual blood stage. Not N-glycosylated. Post-translationally, proteolytically cleaved into the soluble active mature form in the digestive vacuole by cysteine protease falcipains; the process begins at the early ring stage. Proteolysis requires an acidic environment. In absence of falcipains, autoprocessing may serve as an alternate activation system.

The protein resides in the membrane. The protein localises to the vacuole lumen. It is found in the vacuole membrane. The enzyme catalyses Hydrolysis of the bonds linking certain hydrophobic residues in hemoglobin or globin. Also cleaves small molecules substrates such as Ala-Leu-Glu-Arg-Thr-Phe-|-Phe(NO2)-Ser-Phe-Pro-Thr.. Its activity is regulated as follows. Inhibited by pepstatin A. Functionally, during the asexual blood stage, participates in initial cleavage of native host hemoglobin (Hb) resulting in Hb denaturation. May cleave preferentially denatured hemoglobin that has been cleaved by PMI. Digestion of host Hb is an essential step which provides the parasite with amino acids for protein synthesis, and regulates osmolarity. The chain is Plasmepsin II from Plasmodium falciparum (isolate HB3).